Reading from the N-terminus, the 33-residue chain is Cytochrome b6-f complex subunit 6 (33 aa).

Residues 4 to 24 (ITIISYFGFLLASIIFTLVLF) traverse the membrane as a helical segment.

Belongs to the PetL family. The 4 large subunits of the cytochrome b6-f complex are cytochrome b6, subunit IV (17 kDa polypeptide, PetD), cytochrome f and the Rieske protein, while the 4 small subunits are PetG, PetL, PetM and PetN. The complex functions as a dimer.

The protein resides in the plastid. Its subcellular location is the chloroplast thylakoid membrane. In terms of biological role, component of the cytochrome b6-f complex, which mediates electron transfer between photosystem II (PSII) and photosystem I (PSI), cyclic electron flow around PSI, and state transitions. PetL is important for photoautotrophic growth as well as for electron transfer efficiency and stability of the cytochrome b6-f complex. This is Cytochrome b6-f complex subunit 6 from Pinus thunbergii (Japanese black pine).